We begin with the raw amino-acid sequence, 453 residues long: Glutamyl-tRNA(Gln) amidotransferase subunit A (453 aa).

Active-site charge relay system residues include Lys56 and Ser131. Residue Ser155 is the Acyl-ester intermediate of the active site.

The protein belongs to the amidase family. GatA subfamily. In terms of assembly, heterotrimer of A, B and C subunits.

It catalyses the reaction L-glutamyl-tRNA(Gln) + L-glutamine + ATP + H2O = L-glutaminyl-tRNA(Gln) + L-glutamate + ADP + phosphate + H(+). Its function is as follows. Allows the formation of correctly charged Gln-tRNA(Gln) through the transamidation of misacylated Glu-tRNA(Gln) in organisms which lack glutaminyl-tRNA synthetase. The reaction takes place in the presence of glutamine and ATP through an activated gamma-phospho-Glu-tRNA(Gln). This chain is Glutamyl-tRNA(Gln) amidotransferase subunit A (gatA), found in Campylobacter jejuni subsp. jejuni serotype O:2 (strain ATCC 700819 / NCTC 11168).